A 163-amino-acid chain; its full sequence is ATP synthase subunit b (163 aa).

Positions 1-11 (MLWKANVWVLG) are excised as a propeptide. A helical membrane pass occupies residues 16–36 (GISGGTIIYQLLMFIILLALL).

It belongs to the ATPase B chain family. As to quaternary structure, F-type ATPases have 2 components, F(1) - the catalytic core - and F(0) - the membrane proton channel. F(1) has five subunits: alpha(3), beta(3), gamma(1), delta(1), epsilon(1). F(0) has three main subunits: a(1), b(2) and c(10-14). The alpha and beta chains form an alternating ring which encloses part of the gamma chain. F(1) is attached to F(0) by a central stalk formed by the gamma and epsilon chains, while a peripheral stalk is formed by the delta and b chains.

The protein localises to the cell membrane. Functionally, f(1)F(0) ATP synthase produces ATP from ADP in the presence of a proton or sodium gradient. F-type ATPases consist of two structural domains, F(1) containing the extramembraneous catalytic core and F(0) containing the membrane proton channel, linked together by a central stalk and a peripheral stalk. During catalysis, ATP synthesis in the catalytic domain of F(1) is coupled via a rotary mechanism of the central stalk subunits to proton translocation. Component of the F(0) channel, it forms part of the peripheral stalk, linking F(1) to F(0). This is ATP synthase subunit b from Bacillus sp. (strain PS3).